The primary structure comprises 485 residues: MALLVEKTSSGREYKVKDMSQADFGRLELELAEVEMPGLMACRTEFGPSQPFKGARITGSLHMTIQTAVLIETLTALGAEVRWCSCNIFSTQDHAAAAIARDSAAVFAWKGETLQEYWWCTERALDWGPGGGPDLIVDDGGDATLLIHEGVKAEEIFEKTGQVPDPTSTDNPEFQIVLSIIKEGLQVDPKKYHKMKERLVGVSEETTTGVKRLYQMQQNGTLLFPAINVNDSVTKSKFDNLYGCRHSLPDGLMRATDVMIAGKVAVICGYGDVGKGCAAAMKTAGARVIVTEIDPICALQALMEGLQVLTLEDVVSEADIFVTTTGNKDIIMVDHMRKMKNNAIVCNIGHFDNEIDMLGLETYPGVKRITIKPQTDRWVFPETKAGIIVLAEGRLMNLGCATGHPSFVMSCSFTNQVIAQLELWNEKASGKYEKKVYVLPKHLDEKVALLHLGKLGARLTKLSKDQSDYVSIPIEGPYKPPHYRY.

Substrate is bound by residues Thr64, Asp139, and Glu205. An NAD(+)-binding site is contributed by 206 to 208 (TTT). Positions 235 and 239 each coordinate substrate. NAD(+)-binding positions include 271-276 (GDVGKG), Glu292, 348-350 (IGH), Asn397, His404, Lys479, 479-483 (KPPHY), and Tyr483.

This sequence belongs to the adenosylhomocysteinase family. Homotetramer. Requires NAD(+) as cofactor.

It carries out the reaction S-adenosyl-L-homocysteine + H2O = L-homocysteine + adenosine. It participates in amino-acid biosynthesis; L-homocysteine biosynthesis; L-homocysteine from S-adenosyl-L-homocysteine: step 1/1. Its function is as follows. Essential protein during embryogenesis. Adenosylhomocysteine is a competitive inhibitor of S-adenosyl-L-methionine-dependent methyl transferase reactions; therefore adenosylhomocysteinase may play a key role in the control of methylations via regulation of the intracellular concentration of adenosylhomocysteine. Required for DNA methylation-dependent gene silencing. The protein is Adenosylhomocysteinase 1 of Arabidopsis thaliana (Mouse-ear cress).